We begin with the raw amino-acid sequence, 542 residues long: MTAFIFITGGVMSSVGKGIATASIAKILQARGLSVTAIKVDPYLNVDAGTMNPYQHGEVYVTADGGETDLDLGHYERFLDVELSKSHNITSGQVYLSVIDGERRGVYLGQTVQLIPHVTNEIKARIRAIAKEGWDAVVIEIGGTVGDYESLPFLEAARQMRLEENGNVVFVHVAPVPILDVTDEFKTKPLQHSVMELRRVGIQPDIIIIRSTRPITNDVKAKVSLFTNVPQNLIFNSFNVDTIYRVPLILDEQGLGRMLTELLKVKVNEPKWDDWVNLVNSMVNATDEVKVTLCGKYVKLRDAYISIVEAIRHAAAWLRVKPRIIWCDSEEVEKDPDLLPKMNTDAYIILPGFGARGVEGKIMAIRYARENNIPLLGICYGMQLSVVEYARDVLGLKDAHTTEVNPNTTHPVIDITPEEKSINKLGGTMILGDREISITEGSILHGIYGSLRIRERHRHRYEVNPAYFKQLQEAGLVFSAMRIDVPRVEAIELHNHYFFIATQFHPEFRSRLTRPHPLFTALLKAALARKMGLESPYTGVKP.

An amidoligase domain region spans residues M1 to V265. S13 lines the CTP pocket. S13 contacts UTP. ATP is bound at residue S14–I19. Y54 contacts L-glutamine. D71 lines the ATP pocket. 2 residues coordinate Mg(2+): D71 and E140. CTP-binding positions include D147–E149, K186–Q191, and K222. Residues K186 to Q191 and K222 each bind UTP. The Glutamine amidotransferase type-1 domain occupies Y297–G532. G352 provides a ligand contact to L-glutamine. C379 functions as the Nucleophile; for glutamine hydrolysis in the catalytic mechanism. L-glutamine contacts are provided by residues Y380–Q383, E403, and R460. Active-site residues include H505 and E507.

This sequence belongs to the CTP synthase family. In terms of assembly, homotetramer.

The enzyme catalyses UTP + L-glutamine + ATP + H2O = CTP + L-glutamate + ADP + phosphate + 2 H(+). It carries out the reaction L-glutamine + H2O = L-glutamate + NH4(+). It catalyses the reaction UTP + NH4(+) + ATP = CTP + ADP + phosphate + 2 H(+). It functions in the pathway pyrimidine metabolism; CTP biosynthesis via de novo pathway; CTP from UDP: step 2/2. Its activity is regulated as follows. Allosterically activated by GTP, when glutamine is the substrate; GTP has no effect on the reaction when ammonia is the substrate. The allosteric effector GTP functions by stabilizing the protein conformation that binds the tetrahedral intermediate(s) formed during glutamine hydrolysis. Inhibited by the product CTP, via allosteric rather than competitive inhibition. In terms of biological role, catalyzes the ATP-dependent amination of UTP to CTP with either L-glutamine or ammonia as the source of nitrogen. Regulates intracellular CTP levels through interactions with the four ribonucleotide triphosphates. This is CTP synthase from Caldivirga maquilingensis (strain ATCC 700844 / DSM 13496 / JCM 10307 / IC-167).